A 1216-amino-acid polypeptide reads, in one-letter code: DNA polymerase subunit gamma-1 (1216 aa).

Residues 27 to 37 (SSSVLDPVPSD) are compositionally biased toward low complexity. Positions 27 to 50 (SSSVLDPVPSDGQPQSQMPSSENG) are disordered. Over residues 38 to 50 (GQPQSQMPSSENG) the composition is skewed to polar residues. The Exo I motif lies at 179 to 183 (VFDVE). Aspartate 181 (exonuclease activity) is an active-site residue. The short motif at 250–258 (VGHNVSFDR) is the Exo II element. Serine 289 serves as a coordination point for DNA. Basic residues predominate over residues 301-314 (GKHKTQHPTKRGQK). The disordered stretch occupies residues 301–321 (GKHKTQHPTKRGQKSQKNANG). Residues 377–385 (YCARDVWAT) carry the Exo III motif. The disordered stretch occupies residues 488–518 (TASASKLPIEGAGPFGDPMDQEDPGPPSEEE). The tract at residues 491–552 (ASKLPIEGAG…RPQHLPGHPG (62 aa)) is accessory-interacting determinant. Over residues 506-518 (MDQEDPGPPSEEE) the composition is skewed to acidic residues. Residue arginine 560 participates in RNA binding. Serine 574 is a binding site for DNA. RNA contacts are provided by histidine 731, glycine 740, and lysine 745. DNA contacts are provided by lysine 783 and threonine 826. The trigger loop stretch occupies residues 835 to 841 (TWLTASN). 2 residues coordinate RNA: serine 840 and arginine 846. The Pol A signature appears at 864–873 (VGADVDSQEL). Residues aspartate 867, valine 868, serine 870, glutamate 872, arginine 920, lysine 924, and tyrosine 928 each coordinate a 2'-deoxyribonucleoside 5'-triphosphate. The Mg(2+) site is built by aspartate 867 and valine 868. Positions 920 to 935 (REHAKVFNYGRIYGAG) match the Pol B motif. 2 residues coordinate DNA: threonine 1071 and serine 1072. The Pol C signature appears at 1111 to 1118 (HDEVRYLV). Aspartate 1112 provides a ligand contact to a 2'-deoxyribonucleoside 5'-triphosphate. Aspartate 1112 is a Mg(2+) binding site.

This sequence belongs to the DNA polymerase type-A family. Heterotrimer composed of a catalytic subunit and a homodimer of accessory subunits (POLG:POLG2). Interacts with TTC3. Interacts with LIG3. It depends on Mg(2+) as a cofactor.

It is found in the mitochondrion. It localises to the mitochondrion matrix. The protein resides in the mitochondrion nucleoid. The catalysed reaction is DNA(n) + a 2'-deoxyribonucleoside 5'-triphosphate = DNA(n+1) + diphosphate. The enzyme catalyses a 3'-end 2'-deoxyribonucleotidyl-deoxyribonucleotide-DNA + H2O = a 3'-end 2'-deoxyribonucleotide-DNA + a 2'-deoxyribonucleoside 5'-phosphate + H(+). It catalyses the reaction a 5'-end 2'-deoxyribose-2'-deoxyribonucleotide-DNA = (2E,4S)-4-hydroxypenten-2-al-5-phosphate + a 5'-end 5'-phospho-2'-deoxyribonucleoside-DNA + H(+). Inhibited by dideoxynucleotides such as antiviral agent zalcitabine. In terms of biological role, catalytic subunit of DNA polymerase gamma solely responsible for replication of mitochondrial DNA (mtDNA). Replicates both heavy and light strands of the circular mtDNA genome using a single-stranded DNA template, RNA primers and the four deoxyribonucleoside triphosphates as substrates. Has 5' -&gt; 3' polymerase activity. Functionally interacts with TWNK and SSBP1 at the replication fork to form a highly processive replisome, where TWNK unwinds the double-stranded DNA template prior to replication and SSBP1 covers the parental heavy strand to enable continuous replication of the entire mitochondrial genome. A single nucleotide incorporation cycle includes binding of the incoming nucleotide at the insertion site, a phosphodiester bond formation reaction that extends the 3'-end of the primer DNA, and translocation of the primer terminus to the post-insertion site. After completing replication of a mtDNA strand, mediates 3' -&gt; 5' exonucleolytic degradation at the nick to enable proper ligation. Highly accurate due to high nucleotide selectivity and 3' -&gt; 5' exonucleolytic proofreading. Proficiently corrects base substitutions, single-base additions and deletions in non-repetitive sequences and short repeats, but displays lower proofreading activity when replicating longer homopolymeric stretches. Exerts exonuclease activity toward single-stranded DNA and double-stranded DNA containing 3'-terminal mispairs. When a misincorporation occurs, transitions from replication to a pro-nucleolytic editing mode and removes the missincorporated nucleoside in the exonuclease active site. Proceeds via an SN2 nucleolytic mechanism in which Asp-198 catalyzes phosphodiester bond hydrolysis and Glu-200 stabilizes the leaving group. As a result the primer strand becomes one nucleotide shorter and is positioned in the post-insertion site, ready to resume DNA synthesis. Exerts 5'-deoxyribose phosphate (dRP) lyase activity and mediates repair-associated mtDNA synthesis (gap filling) in base-excision repair pathway. Catalyzes the release of the 5'-terminal 2-deoxyribose-5-phosphate sugar moiety from incised apurinic/apyrimidinic (AP) sites to produce a substrate for DNA ligase. The dRP lyase reaction does not require divalent metal ions and likely proceeds via a Schiff base intermediate in a beta-elimination reaction mechanism. In Rattus norvegicus (Rat), this protein is DNA polymerase subunit gamma-1.